Reading from the N-terminus, the 471-residue chain is L-amino acid dehydrogenase (471 aa).

Residue glycine 31 participates in Mg(2+) binding. Residue serine 33 coordinates FAD. Residue glycine 34 participates in Mg(2+) binding. FAD-binding residues include glutamate 52, arginine 60, and valine 256. Alanine 283 lines the Mg(2+) pocket. An FAD-binding site is contributed by phenylalanine 453.

It belongs to the flavin monoamine oxidase family. FAD is required as a cofactor. The cofactor is Mg(2+).

It is found in the cellular thylakoid membrane. It carries out the reaction a plastoquinone + an L-alpha-amino acid + H2O = a plastoquinol + a 2-oxocarboxylate + NH4(+). The catalysed reaction is a plastoquinone + L-arginine + H2O = a plastoquinol + 5-guanidino-2-oxopentanoate + NH4(+). It functions in the pathway amino-acid degradation; L-arginine degradation. With respect to regulation, inhibited by Ca(2+) and other cations such as Ni(2+), Co(2+) and Zn(2+). The inhibition by o-phenanthroline and salicylhydroxamic acid suggests the presence of a metal cofactor besides FAD in the enzyme. The L-arginine-stimulated O(2) consumption involving slr0782 is inhibited by inhibitors of the respiratory electron transport chain, such as KCN and 2,5-dibromo-3-methyl-6-isopropyl-p-benzoquinone, which indicates a participation of the cytochrome b6/f complex and of a cytochrome oxidase. In terms of biological role, L-amino acid dehydrogenase with broad substrate specificity. Catalyzes the oxidative deamination of various L-amino acids, L-Arg and L-Cys being the best substrates in vitro. Likely functions mainly as an L-arginine dehydrogenase in vivo. Probably feeds electrons from L-arginine oxidation and also from the oxidation of other L-amino acids into the respiratory electron transport chain associated to the thylakoid membrane, and does not directly interact with molecular oxygen but donates electrons to the plastoquinone pool. Cannot use D-amino acids as substrates. This chain is L-amino acid dehydrogenase, found in Synechocystis sp. (strain ATCC 27184 / PCC 6803 / Kazusa).